Here is a 345-residue protein sequence, read N- to C-terminus: Probable dual-specificity RNA methyltransferase RlmN (345 aa).

The active-site Proton acceptor is glutamate 90. Residues 96–326 (YDYGNSICIS…STIRKEMGAD (231 aa)) enclose the Radical SAM core domain. Cysteine 103 and cysteine 331 are joined by a disulfide. Positions 110, 114, and 117 each coordinate [4Fe-4S] cluster. Residues 157-158 (GE), serine 189, 212-214 (SLH), and asparagine 288 contribute to the S-adenosyl-L-methionine site. Catalysis depends on cysteine 331, which acts as the S-methylcysteine intermediate.

It belongs to the radical SAM superfamily. RlmN family. [4Fe-4S] cluster is required as a cofactor.

It is found in the cytoplasm. It carries out the reaction adenosine(2503) in 23S rRNA + 2 reduced [2Fe-2S]-[ferredoxin] + 2 S-adenosyl-L-methionine = 2-methyladenosine(2503) in 23S rRNA + 5'-deoxyadenosine + L-methionine + 2 oxidized [2Fe-2S]-[ferredoxin] + S-adenosyl-L-homocysteine. The enzyme catalyses adenosine(37) in tRNA + 2 reduced [2Fe-2S]-[ferredoxin] + 2 S-adenosyl-L-methionine = 2-methyladenosine(37) in tRNA + 5'-deoxyadenosine + L-methionine + 2 oxidized [2Fe-2S]-[ferredoxin] + S-adenosyl-L-homocysteine. Functionally, specifically methylates position 2 of adenine 2503 in 23S rRNA and position 2 of adenine 37 in tRNAs. The polypeptide is Probable dual-specificity RNA methyltransferase RlmN (Clostridium acetobutylicum (strain ATCC 824 / DSM 792 / JCM 1419 / IAM 19013 / LMG 5710 / NBRC 13948 / NRRL B-527 / VKM B-1787 / 2291 / W)).